Reading from the N-terminus, the 231-residue chain is E3 ubiquitin-protein ligase At3g02290 (231 aa).

Basic and acidic residues predominate over residues 103–118; it reads GSSHSHEEVEPLRSDS. The tract at residues 103 to 125 is disordered; sequence GSSHSHEEVEPLRSDSDADSESF. Residues 181–222 form an RING-type; atypical zinc finger; the sequence is CPTCLEEYTSENPKIVTKCSHHFHLSCIYEWMERSENCPVCG.

Its subcellular location is the cytoplasm. The enzyme catalyses S-ubiquitinyl-[E2 ubiquitin-conjugating enzyme]-L-cysteine + [acceptor protein]-L-lysine = [E2 ubiquitin-conjugating enzyme]-L-cysteine + N(6)-ubiquitinyl-[acceptor protein]-L-lysine.. The protein operates within protein modification; protein ubiquitination. Mediates E2-dependent protein ubiquitination. The protein is E3 ubiquitin-protein ligase At3g02290 of Arabidopsis thaliana (Mouse-ear cress).